We begin with the raw amino-acid sequence, 454 residues long: Putative serine/threonine-protein phosphatase C27B7.6 (454 aa).

Positions 65, 67, 93, and 125 each coordinate Mn(2+). His-126 acts as the Proton donor in catalysis. His-174 and His-252 together coordinate Mn(2+). The disordered stretch occupies residues 414–454 (RKKLGMTTSTTPPPPRTPSPDAPLAQSPPIPRSPPSSTENA). Residues 424–447 (TPPPPRTPSPDAPLAQSPPIPRSP) are compositionally biased toward pro residues.

This sequence belongs to the PPP phosphatase family. PP-1 subfamily. It depends on Mn(2+) as a cofactor.

It carries out the reaction O-phospho-L-seryl-[protein] + H2O = L-seryl-[protein] + phosphate. The catalysed reaction is O-phospho-L-threonyl-[protein] + H2O = L-threonyl-[protein] + phosphate. The sequence is that of Putative serine/threonine-protein phosphatase C27B7.6 from Caenorhabditis elegans.